The following is a 363-amino-acid chain: Ribosomal RNA large subunit methyltransferase M (363 aa).

S-adenosyl-L-methionine is bound by residues serine 190, 223–226 (CPGG), aspartate 242, aspartate 262, and aspartate 280. Lysine 309 acts as the Proton acceptor in catalysis.

It belongs to the class I-like SAM-binding methyltransferase superfamily. RNA methyltransferase RlmE family. RlmM subfamily. Monomer.

It localises to the cytoplasm. The enzyme catalyses cytidine(2498) in 23S rRNA + S-adenosyl-L-methionine = 2'-O-methylcytidine(2498) in 23S rRNA + S-adenosyl-L-homocysteine + H(+). Its function is as follows. Catalyzes the 2'-O-methylation at nucleotide C2498 in 23S rRNA. In Actinobacillus pleuropneumoniae serotype 5b (strain L20), this protein is Ribosomal RNA large subunit methyltransferase M.